Here is a 192-residue protein sequence, read N- to C-terminus: Peptidyl-tRNA hydrolase (192 aa).

Tyrosine 14 contacts tRNA. The active-site Proton acceptor is the histidine 19. Residues tyrosine 64, asparagine 66, and asparagine 112 each contribute to the tRNA site.

The protein belongs to the PTH family. In terms of assembly, monomer.

The protein resides in the cytoplasm. The enzyme catalyses an N-acyl-L-alpha-aminoacyl-tRNA + H2O = an N-acyl-L-amino acid + a tRNA + H(+). Its function is as follows. Hydrolyzes ribosome-free peptidyl-tRNAs (with 1 or more amino acids incorporated), which drop off the ribosome during protein synthesis, or as a result of ribosome stalling. In terms of biological role, catalyzes the release of premature peptidyl moieties from peptidyl-tRNA molecules trapped in stalled 50S ribosomal subunits, and thus maintains levels of free tRNAs and 50S ribosomes. The protein is Peptidyl-tRNA hydrolase of Anaeromyxobacter dehalogenans (strain 2CP-1 / ATCC BAA-258).